Here is a 62-residue protein sequence, read N- to C-terminus: Photosystem II reaction center protein Z (62 aa).

2 consecutive transmembrane segments (helical) span residues 8-28 (AVFA…VVFA) and 41-61 (FSGT…NSLI).

This sequence belongs to the PsbZ family. In terms of assembly, PSII is composed of 1 copy each of membrane proteins PsbA, PsbB, PsbC, PsbD, PsbE, PsbF, PsbH, PsbI, PsbJ, PsbK, PsbL, PsbM, PsbT, PsbY, PsbZ, Psb30/Ycf12, at least 3 peripheral proteins of the oxygen-evolving complex and a large number of cofactors. It forms dimeric complexes.

The protein resides in the plastid. The protein localises to the chloroplast thylakoid membrane. May control the interaction of photosystem II (PSII) cores with the light-harvesting antenna, regulates electron flow through the 2 photosystem reaction centers. PSII is a light-driven water plastoquinone oxidoreductase, using light energy to abstract electrons from H(2)O, generating a proton gradient subsequently used for ATP formation. This Lotus japonicus (Lotus corniculatus var. japonicus) protein is Photosystem II reaction center protein Z.